A 172-amino-acid polypeptide reads, in one-letter code: Putative phosphoesterase BCE_1348 (172 aa).

His34 functions as the Proton donor in the catalytic mechanism. Short sequence motifs (HXTX) lie at residues His34–Leu37 and His115–Ile118. The active-site Proton acceptor is His115.

Belongs to the 2H phosphoesterase superfamily. YjcG family.

In Bacillus cereus (strain ATCC 10987 / NRS 248), this protein is Putative phosphoesterase BCE_1348.